Consider the following 315-residue polypeptide: Cytochrome f (315 aa).

Residues 1-36 (MKQSLLSVLTKKSLRLLAALFLVVTSVFSLPQAAQA) form the signal peptide. The heme site is built by Phe37, Cys57, Cys60, and His61. The chain crosses the membrane as a helical span at residues 281–301 (IKWLMVFFSAIMISQTLLVLK).

Belongs to the cytochrome f family. In terms of assembly, the 4 large subunits of the cytochrome b6-f complex are cytochrome b6, subunit IV (17 kDa polypeptide, PetD), cytochrome f and the Rieske protein, while the 4 small subunits are PetG, PetL, PetM and PetN. The complex functions as a dimer. Heme is required as a cofactor.

It is found in the cellular thylakoid membrane. Component of the cytochrome b6-f complex, which mediates electron transfer between photosystem II (PSII) and photosystem I (PSI), cyclic electron flow around PSI, and state transitions. The chain is Cytochrome f from Acaryochloris marina (strain MBIC 11017).